The sequence spans 101 residues: Enhancer of yellow 2 transcription factor (101 aa).

The protein belongs to the ENY2 family. As to quaternary structure, component of the nuclear pore complex (NPC)-associated AMEX complex (anchoring and mRNA export complex), composed of at least e(y)2 and xmas-2. Component of the SAGA transcription coactivator-HAT complexes, at least composed of Ada2b, e(y)2, Pcaf/Gcn5, Taf10 and Nipped-A/Trrap. Within the SAGA complex, e(y)2, Sgf11, and not/nonstop form an additional subcomplex of SAGA called the DUB module (deubiquitination module). Component of the THO complex, composed of at least e(y)2, HPR1, THO2, THOC5, THOC6 and THOC7. Interacts with e(y)1. Interacts with su(Hw) (via zinc fingers). Interacts with xmas-2; required for localization to the nuclear periphery. Interacts with the nuclear pore complex (NPC).

It localises to the nucleus. Its subcellular location is the nucleoplasm. It is found in the cytoplasm. Its function is as follows. Involved in mRNA export coupled transcription activation by association with both the AMEX and the SAGA complexes. The SAGA complex is a multiprotein complex that activates transcription by remodeling chromatin and mediating histone acetylation and deubiquitination. Within the SAGA complex, participates in a subcomplex that specifically deubiquitinates histone H2B. The SAGA complex is recruited to specific gene promoters by activators, where it is required for transcription. Required for nuclear receptor-mediated transactivation. Involved in transcription elongation by recruiting the THO complex onto nascent mRNA. The AMEX complex functions in docking export-competent ribonucleoprotein particles (mRNPs) to the nuclear entrance of the nuclear pore complex (nuclear basket). AMEX participates in mRNA export and accurate chromatin positioning in the nucleus by tethering genes to the nuclear periphery. This is Enhancer of yellow 2 transcription factor from Drosophila sechellia (Fruit fly).